Consider the following 395-residue polypeptide: S-adenosylmethionine synthase (395 aa).

H14 serves as a coordination point for ATP. D16 contacts Mg(2+). E42 serves as a coordination point for K(+). Residues E55 and Q98 each coordinate L-methionine. The flexible loop stretch occupies residues 98–108; sequence QSPDIALGVDK. ATP-binding positions include 175 to 177, 242 to 243, D251, 257 to 258, A274, and K278; these read DGK, RF, and RK. Residue D251 participates in L-methionine binding. Residue K282 coordinates L-methionine.

Belongs to the AdoMet synthase family. In terms of assembly, homotetramer; dimer of dimers. Mg(2+) serves as cofactor. Requires K(+) as cofactor.

Its subcellular location is the cytoplasm. It catalyses the reaction L-methionine + ATP + H2O = S-adenosyl-L-methionine + phosphate + diphosphate. Its pathway is amino-acid biosynthesis; S-adenosyl-L-methionine biosynthesis; S-adenosyl-L-methionine from L-methionine: step 1/1. In terms of biological role, catalyzes the formation of S-adenosylmethionine (AdoMet) from methionine and ATP. The overall synthetic reaction is composed of two sequential steps, AdoMet formation and the subsequent tripolyphosphate hydrolysis which occurs prior to release of AdoMet from the enzyme. The sequence is that of S-adenosylmethionine synthase from Thermosipho africanus (strain TCF52B).